Reading from the N-terminus, the 1224-residue chain is Bifunctional protein PutA (1224 aa).

A disordered region spans residues 1-25 (MSPNPLQKPAIDAAPAPFADFAPPV). Over residues 9 to 23 (PAIDAAPAPFADFAP) the composition is skewed to low complexity. The tract at residues 164–501 (LAARVTRLIS…SFVHRINDPK (338 aa)) is proline dehydrogenase. Residues 576–1032 (TGPAAGETRT…VTTAPVPPQH (457 aa)) are aldehyde dehydrogenase. Active-site residues include glutamate 800 and cysteine 834.

In the N-terminal section; belongs to the proline dehydrogenase family. The protein in the C-terminal section; belongs to the aldehyde dehydrogenase family. Requires FAD as cofactor.

The catalysed reaction is L-proline + a quinone = (S)-1-pyrroline-5-carboxylate + a quinol + H(+). The enzyme catalyses L-glutamate 5-semialdehyde + NAD(+) + H2O = L-glutamate + NADH + 2 H(+). It functions in the pathway amino-acid degradation; L-proline degradation into L-glutamate; L-glutamate from L-proline: step 1/2. The protein operates within amino-acid degradation; L-proline degradation into L-glutamate; L-glutamate from L-proline: step 2/2. Oxidizes proline to glutamate for use as a carbon and nitrogen source, and also functions as a transcriptional repressor of its own gene. This chain is Bifunctional protein PutA (putA), found in Rhizobium meliloti (Ensifer meliloti).